A 315-amino-acid polypeptide reads, in one-letter code: Probable cell division protein WhiA (315 aa).

The H-T-H motif DNA-binding region spans 275–309; the sequence is NLKELGEMVPSGVVSKSGINHRLRKINEIADKIRE.

This sequence belongs to the WhiA family.

In terms of biological role, involved in cell division and chromosome segregation. The protein is Probable cell division protein WhiA of Brevibacillus brevis (strain 47 / JCM 6285 / NBRC 100599).